The primary structure comprises 89 residues: Putative regulatory protein PCC8801_0196 (89 aa).

It belongs to the RemA family.

This Rippkaea orientalis (strain PCC 8801 / RF-1) (Cyanothece sp. (strain PCC 8801)) protein is Putative regulatory protein PCC8801_0196.